The sequence spans 40 residues: Photosystem II reaction center protein J (40 aa).

A helical membrane pass occupies residues 8 to 28 (IPLWIIGTVTGIIVIGLIGIF).

This sequence belongs to the PsbJ family. As to quaternary structure, PSII is composed of 1 copy each of membrane proteins PsbA, PsbB, PsbC, PsbD, PsbE, PsbF, PsbH, PsbI, PsbJ, PsbK, PsbL, PsbM, PsbT, PsbX, PsbY, PsbZ, Psb30/Ycf12, at least 3 peripheral proteins of the oxygen-evolving complex and a large number of cofactors. It forms dimeric complexes.

The protein localises to the plastid. Its subcellular location is the chloroplast thylakoid membrane. Functionally, one of the components of the core complex of photosystem II (PSII). PSII is a light-driven water:plastoquinone oxidoreductase that uses light energy to abstract electrons from H(2)O, generating O(2) and a proton gradient subsequently used for ATP formation. It consists of a core antenna complex that captures photons, and an electron transfer chain that converts photonic excitation into a charge separation. In Morus indica (Mulberry), this protein is Photosystem II reaction center protein J.